The following is an 897-amino-acid chain: N-terminal acetyltransferase A complex auxiliary subunit NAA15 (897 aa).

TPR repeat units follow at residues 77 to 110 (HVCW…DPDN), 111 to 144 (LEIL…KPNH), 189 to 222 (TEMI…IVDK), 223 to 256 (LSYK…NPDN), 298 to 331 (SSAV…KGVP), 380 to 413 (LWTL…TPTV), and 488 to 523 (QCMW…YADI). Disordered stretches follow at residues 578-640 (KSTA…DPHG) and 863-897 (SRKS…SVAT). Positions 602–617 (KAEARAKKEAESKSEE) are enriched in basic and acidic residues. A compositionally biased stretch (polar residues) spans 863–872 (SRKSNENGDT).

In terms of assembly, part of the NatA complex. Associates with ribosomes. Interacts with NAA10. Expressed in leaves, roots, shoots and flowers.

In terms of biological role, auxiliary subunit of the NatA N-alpha-acetyltransferase complex. Required for male gametocyte development, embryogenesis, suspensor development and the formation of the quiescent center (QC) in the root meristem. Involved in plant immunity through the regulation of SNC1 stability. Required for embryo development. This chain is N-terminal acetyltransferase A complex auxiliary subunit NAA15, found in Arabidopsis thaliana (Mouse-ear cress).